A 132-amino-acid polypeptide reads, in one-letter code: S-protein homolog 15 (132 aa).

The N-terminal stretch at 1–20 (MSRLIFFILVTAIYFVGNEA) is a signal peptide.

The protein belongs to the plant self-incompatibility (S1) protein family.

It is found in the secreted. This chain is S-protein homolog 15, found in Arabidopsis thaliana (Mouse-ear cress).